We begin with the raw amino-acid sequence, 613 residues long: Leucine-rich repeat and immunoglobulin-like domain-containing nogo receptor-interacting protein 1 (613 aa).

Positions 1–34 (MLAGEASMRSPILACWQPILLLMLGSILSGSATG) are cleaved as a signal peptide. 2 disulfide bridges follow: Cys35-Cys41 and Cys39-Cys50. The LRRNT domain occupies 35–64 (CPPRCECSAQERAVLCHRKRFMVVPEGIPT). Residues 35 to 554 (CPPRCECSAQ…FDIKTLIIAT (520 aa)) are Extracellular-facing. LRR repeat units follow at residues 65–86 (ETRQ…EFAN), 89–110 (HLEE…AFNN), 113–134 (NLRT…VFTG), 137–158 (NLTK…MFQD), 161–182 (NLKS…AFSG), 185–206 (SLEQ…ALSH), 209–230 (GLIV…SFKR), 257–278 (NLTS…SVRH), 281–302 (YLRF…MLHD), 305–326 (RLQE…AFRG), and 329–350 (YLRI…AFHS). Asn137 is a glycosylation site (N-linked (GlcNAc...) asparagine). Residue Asn195 is glycosylated (N-linked (GlcNAc...) asparagine). Residues Asn257, Asn267, and Asn286 are each glycosylated (N-linked (GlcNAc...) asparagine). A glycan (N-linked (GlcNAc...) asparagine) is linked at Asn334. In terms of domain architecture, LRRCT spans 362–416 (NPLACDCRLLWVFRRRWRLNFNKQQPTCSTPEFVQGKEFKDFPDVLLPNYFTCRR). Intrachain disulfides connect Cys366-Cys389, Cys368-Cys414, and Cys439-Cys490. In terms of domain architecture, Ig-like C2-type spans 404-508 (PDVLLPNYFT…DTMLAHLHVR (105 aa)). N-linked (GlcNAc...) asparagine glycosylation is found at Asn485, Asn498, Asn519, Asn530, and Asn535. The helical transmembrane segment at 555-575 (TMGFISFLGVVLFCLVLLFLW) threads the bilayer. At 576–613 (SRGKGNTKHNIEIEYVPRKSDAGISSADAPRKFNMKMI) the chain is on the cytoplasmic side.

Homotetramer. Forms ternary complex with RTN4R/NGFR and RTN4R/TNFRSF19. N-glycosylated. Contains predominantly high-mannose glycans.

Its subcellular location is the cell membrane. In terms of biological role, functional component of the Nogo receptor signaling complex (RTN4R/NGFR) in RhoA activation responsible for some inhibition of axonal regeneration by myelin-associated factors. Is also an important negative regulator of oligodentrocyte differentiation and axonal myelination. This Gallus gallus (Chicken) protein is Leucine-rich repeat and immunoglobulin-like domain-containing nogo receptor-interacting protein 1 (LINGO1).